Consider the following 231-residue polypeptide: dTTP/UTP pyrophosphatase (231 aa).

Catalysis depends on Asp-81, which acts as the Proton acceptor.

Belongs to the Maf family. YhdE subfamily. Requires a divalent metal cation as cofactor.

It is found in the cytoplasm. It carries out the reaction dTTP + H2O = dTMP + diphosphate + H(+). The catalysed reaction is UTP + H2O = UMP + diphosphate + H(+). In terms of biological role, nucleoside triphosphate pyrophosphatase that hydrolyzes dTTP and UTP. May have a dual role in cell division arrest and in preventing the incorporation of modified nucleotides into cellular nucleic acids. This Lawsonia intracellularis (strain PHE/MN1-00) protein is dTTP/UTP pyrophosphatase.